A 385-amino-acid polypeptide reads, in one-letter code: Probable caffeine synthase 3 (385 aa).

Tyr-18, Cys-62, Asn-67, Asp-101, Leu-102, Ser-140, and Phe-141 together coordinate S-adenosyl-L-homocysteine. Caffeine is bound by residues Tyr-158, Gln-161, and Phe-162. Asn-179 serves as a coordination point for Mg(2+). Position 238 (Thr-238) interacts with caffeine. 3 residues coordinate Mg(2+): Asp-261, Phe-263, and Asn-264. Residue Tyr-369 participates in caffeine binding.

This sequence belongs to the methyltransferase superfamily. Type-7 methyltransferase family. Mg(2+) is required as a cofactor. Expressed in roots, stems, young and old leaves.

It functions in the pathway alkaloid biosynthesis. Functionally, may be involved in the biosynthesis of caffeine. This Coffea arabica (Arabian coffee) protein is Probable caffeine synthase 3.